Reading from the N-terminus, the 212-residue chain is Ribonuclease P protein component 3 (212 aa).

This sequence belongs to the eukaryotic/archaeal RNase P protein component 3 family. Consists of a catalytic RNA component and at least 4-5 protein subunits.

The protein localises to the cytoplasm. The enzyme catalyses Endonucleolytic cleavage of RNA, removing 5'-extranucleotides from tRNA precursor.. Part of ribonuclease P, a protein complex that generates mature tRNA molecules by cleaving their 5'-ends. This is Ribonuclease P protein component 3 from Pyrococcus abyssi (strain GE5 / Orsay).